Reading from the N-terminus, the 84-residue chain is Sulfur carrier protein TusA (84 aa).

The active-site Cysteine persulfide intermediate is C19.

This sequence belongs to the sulfur carrier protein TusA family. In terms of assembly, interacts with IscS.

It localises to the cytoplasm. It participates in tRNA modification. In terms of biological role, sulfur carrier protein involved in sulfur trafficking in the cell. Part of a sulfur-relay system required for 2-thiolation during synthesis of 2-thiouridine of the modified wobble base 5-methylaminomethyl-2-thiouridine (mnm(5)s(2)U) in tRNA. Interacts with IscS and stimulates its cysteine desulfurase activity. Accepts an activated sulfur from IscS, which is then transferred to TusD, and thus determines the direction of sulfur flow from IscS to 2-thiouridine formation. Also appears to be involved in sulfur transfer for the biosynthesis of molybdopterin. This is Sulfur carrier protein TusA from Yersinia enterocolitica serotype O:8 / biotype 1B (strain NCTC 13174 / 8081).